A 220-amino-acid polypeptide reads, in one-letter code: RNA-free ribonuclease P (220 aa).

Belongs to the HARP family.

It carries out the reaction Endonucleolytic cleavage of RNA, removing 5'-extranucleotides from tRNA precursor.. Its function is as follows. RNA-free RNase P that catalyzes the removal of the 5'-leader sequence from pre-tRNA to produce the mature 5'-terminus. In Methanothermobacter thermautotrophicus (strain ATCC 29096 / DSM 1053 / JCM 10044 / NBRC 100330 / Delta H) (Methanobacterium thermoautotrophicum), this protein is RNA-free ribonuclease P.